Reading from the N-terminus, the 297-residue chain is uncharacterized protein (297 aa).

The active site involves Glu-46.

The protein belongs to the PhzF family. As to quaternary structure, homodimer and homotetramer.

This is an uncharacterized protein from Salmonella typhimurium (strain LT2 / SGSC1412 / ATCC 700720).